Consider the following 89-residue polypeptide: Small ribosomal subunit protein uS15 (89 aa).

Belongs to the universal ribosomal protein uS15 family. Part of the 30S ribosomal subunit. Forms a bridge to the 50S subunit in the 70S ribosome, contacting the 23S rRNA.

In terms of biological role, one of the primary rRNA binding proteins, it binds directly to 16S rRNA where it helps nucleate assembly of the platform of the 30S subunit by binding and bridging several RNA helices of the 16S rRNA. Functionally, forms an intersubunit bridge (bridge B4) with the 23S rRNA of the 50S subunit in the ribosome. The protein is Small ribosomal subunit protein uS15 of Zymomonas mobilis subsp. mobilis (strain ATCC 31821 / ZM4 / CP4).